Here is a 223-residue protein sequence, read N- to C-terminus: N-acetylmuramate alpha-1-phosphate uridylyltransferase (223 aa).

UTP contacts are provided by residues Gly11–Arg13 and Lys23. Substrate is bound at residue Asn105. Asp107 lines the Mg(2+) pocket. Positions 140 and 205 each coordinate substrate. Mg(2+) is bound at residue Asp205.

Belongs to the nucleotidyltransferase MurU family. In terms of assembly, monomer. The cofactor is Mg(2+).

It carries out the reaction N-acetyl-alpha-D-muramate 1-phosphate + UDP + H(+) = UDP-N-acetyl-alpha-D-muramate + phosphate. The protein operates within cell wall biogenesis; peptidoglycan recycling. Is completely inhibited by EDTA in vitro. In terms of biological role, catalyzes the formation of UDP-N-acetylmuramate (UDP-MurNAc), a crucial precursor of the bacterial peptidoglycan cell wall, from UTP and MurNAc-alpha-1P. Is involved in peptidoglycan recycling as part of a cell wall recycling pathway that bypasses de novo biosynthesis of the peptidoglycan precursor UDP-MurNAc. Plays a role in intrinsic resistance to fosfomycin, which targets the de novo synthesis of UDP-MurNAc. Is not able to use GlcNAc-alpha-1P and GalNAc-alpha-1P as substrates. Cannot accept other nucleotide triphosphates (ATP, CTP, TTP, or GTP) than UTP. This is N-acetylmuramate alpha-1-phosphate uridylyltransferase from Pseudomonas putida (strain ATCC 47054 / DSM 6125 / CFBP 8728 / NCIMB 11950 / KT2440).